We begin with the raw amino-acid sequence, 248 residues long: MVSILDSSFKSKTEKKGAIVLLSGGLDSTTCLYLAAKDFGYPKNKKLPLLALSFDYSQKHKIELTKSKKIAKTLGIKHVIQKLDPGFFLGSSLTESKIKVRKNAKSLFSGDETEIPNTYVPGRNILFLSFALSLAEGHGYDSIYIGVNALDYSGYPDCRPEFIDSFQKMANLGTKKGVSGTGDSIQIKTPLLHLGKKEIIELGMSVGAPLGLTHSCYDPVSGKPCGKCDSCILRAKGFLEVGLKDPAL.

Residue 22–32 coordinates ATP; it reads LSGGLDSTTCL. Zn(2+) is bound by residues Cys216, Cys225, Cys228, and Cys231.

This sequence belongs to the QueC family. Zn(2+) is required as a cofactor.

The catalysed reaction is 7-carboxy-7-deazaguanine + NH4(+) + ATP = 7-cyano-7-deazaguanine + ADP + phosphate + H2O + H(+). The protein operates within purine metabolism; 7-cyano-7-deazaguanine biosynthesis. Catalyzes the ATP-dependent conversion of 7-carboxy-7-deazaguanine (CDG) to 7-cyano-7-deazaguanine (preQ(0)). In Leptospira biflexa serovar Patoc (strain Patoc 1 / Ames), this protein is 7-cyano-7-deazaguanine synthase.